Reading from the N-terminus, the 316-residue chain is Acetyl-coenzyme A carboxylase carboxyl transferase subunit alpha (316 aa).

In terms of domain architecture, CoA carboxyltransferase C-terminal spans K39–N293.

This sequence belongs to the AccA family. In terms of assembly, acetyl-CoA carboxylase is a heterohexamer composed of biotin carboxyl carrier protein (AccB), biotin carboxylase (AccC) and two subunits each of ACCase subunit alpha (AccA) and ACCase subunit beta (AccD).

Its subcellular location is the cytoplasm. It catalyses the reaction N(6)-carboxybiotinyl-L-lysyl-[protein] + acetyl-CoA = N(6)-biotinyl-L-lysyl-[protein] + malonyl-CoA. It functions in the pathway lipid metabolism; malonyl-CoA biosynthesis; malonyl-CoA from acetyl-CoA: step 1/1. In terms of biological role, component of the acetyl coenzyme A carboxylase (ACC) complex. First, biotin carboxylase catalyzes the carboxylation of biotin on its carrier protein (BCCP) and then the CO(2) group is transferred by the carboxyltransferase to acetyl-CoA to form malonyl-CoA. The polypeptide is Acetyl-coenzyme A carboxylase carboxyl transferase subunit alpha (Coxiella burnetii (strain CbuK_Q154) (Coxiella burnetii (strain Q154))).